The chain runs to 165 residues: E3 ubiquitin ligase complex SCF subunit sconC (165 aa).

An interaction with the F-box domain of F-box proteins region spans residues 106-165 (ILAANYLDIKALLDVGCKTVANMIKGKSPEEIRKTFNIQNDFTPEEEDQIRRENEWAEDR).

This sequence belongs to the SKP1 family. Component of the SCF (SKP1-CUL1-F-box protein) E3 ubiquitin ligase complexes.

It participates in protein modification; protein ubiquitination. Functionally, essential component of the SCF (SKP1-CUL1-F-box protein) E3 ubiquitin ligase complexes, which mediate the ubiquitination and subsequent proteasomal degradation of target proteins. Controls sulfur metabolite repression, probably by mediating the inactivation or degradation of the metR transcription factor. In Arthroderma otae (strain ATCC MYA-4605 / CBS 113480) (Microsporum canis), this protein is E3 ubiquitin ligase complex SCF subunit sconC (sconC).